Consider the following 136-residue polypeptide: Small ribosomal subunit protein uS9 (136 aa).

It belongs to the universal ribosomal protein uS9 family.

The protein is Small ribosomal subunit protein uS9 of Borreliella afzelii (strain PKo) (Borrelia afzelii).